Consider the following 246-residue polypeptide: Cell division protein ZapD (246 aa).

It belongs to the ZapD family. In terms of assembly, interacts with FtsZ.

It is found in the cytoplasm. Cell division factor that enhances FtsZ-ring assembly. Directly interacts with FtsZ and promotes bundling of FtsZ protofilaments, with a reduction in FtsZ GTPase activity. In Vibrio cholerae serotype O1 (strain ATCC 39541 / Classical Ogawa 395 / O395), this protein is Cell division protein ZapD.